Reading from the N-terminus, the 353-residue chain is S-adenosylmethionine:tRNA ribosyltransferase-isomerase (353 aa).

This sequence belongs to the QueA family. As to quaternary structure, monomer.

It localises to the cytoplasm. It carries out the reaction 7-aminomethyl-7-carbaguanosine(34) in tRNA + S-adenosyl-L-methionine = epoxyqueuosine(34) in tRNA + adenine + L-methionine + 2 H(+). It functions in the pathway tRNA modification; tRNA-queuosine biosynthesis. Functionally, transfers and isomerizes the ribose moiety from AdoMet to the 7-aminomethyl group of 7-deazaguanine (preQ1-tRNA) to give epoxyqueuosine (oQ-tRNA). The polypeptide is S-adenosylmethionine:tRNA ribosyltransferase-isomerase (Paraburkholderia phymatum (strain DSM 17167 / CIP 108236 / LMG 21445 / STM815) (Burkholderia phymatum)).